Reading from the N-terminus, the 741-residue chain is Protein O-mannosyl-transferase TMTC4 (741 aa).

Residues 1–14 (MAVLDTDLDHILPS) are Cytoplasmic-facing. The chain crosses the membrane as a helical span at residues 15–35 (SVLPPFWAKLVVGSVAIVCFA). At 36-111 (RSYDGDFVFD…FHPVGFHVVN (76 aa)) the chain is on the extracellular side. Residue N78 is glycosylated (N-linked (GlcNAc...) asparagine). Residues 112 to 132 (ILLHSGISVLMVDVFSVLFGG) traverse the membrane as a helical segment. At 133–141 (LQYTSKGRR) the chain is on the cytoplasmic side. A helical transmembrane segment spans residues 142 to 162 (LHLAPRASLLAALLFAVHPVH). At 163 to 165 (TEC) the chain is on the extracellular side. A helical transmembrane segment spans residues 166 to 186 (VAGVVGRADLLCALFFLLSFL). Topologically, residues 187-198 (GYCKAFRESNKE) are cytoplasmic. Residues 199–219 (GAHSSTFWVLLSIFLGAVAML) form a helical membrane-spanning segment. At 220-224 (CKEQG) the chain is on the extracellular side. Residues 225–245 (ITVLGLNAVFDILVIGKFNVL) traverse the membrane as a helical segment. Topologically, residues 246–268 (EIVQKVLHKDKSLENLGMLRNGG) are cytoplasmic. The chain crosses the membrane as a helical span at residues 269–288 (LLFRMTLLTSGGAGMLYVRW). Topologically, residues 289 to 354 (RIMGTGPPAF…PLIKSISDWR (66 aa)) are extracellular. A helical membrane pass occupies residues 355–375 (VIALAALWFCLIGLICQALCS). Topologically, residues 376 to 382 (EDGHKRR) are cytoplasmic. The helical transmembrane segment at 383–403 (ILTLGLGFLVIPFLPASNLFF) threads the bilayer. Over 404-412 (RVGFVVAER) the chain is Extracellular. Residues 413 to 433 (VLYLPSVGYCVLLTFGFGALS) form a helical membrane-spanning segment. The Cytoplasmic segment spans residues 434–440 (KHTKKKK). Residues 441 to 461 (LIAAVVLGILFINTLRCVLRS) traverse the membrane as a helical segment. Topologically, residues 462 to 741 (GEWRSEEQLF…KLELMQKKAV (280 aa)) are extracellular. TPR repeat units lie at residues 482 to 515 (AKVHYNIGKNLADKGNQTAAIRYYREAVRLNPKY), 516 to 549 (VHAMNNLGNILKERNELQEAEELLSLAVQIQPDF), 550 to 583 (AAAWMNLGIVQNSLKRFEAAEQSYRTAIKHRRKY), 584 to 617 (PDCYYNLGRLYADLNRHVDALNAWRNATVLKPEH), 618 to 651 (SLAWNNMIILLDNTGNLAQAEAVGREALELIPND), 652 to 685 (HSLMFSLANVLGKSQKYKESEALFLKAIKANPNA), and 686 to 719 (ASYHGNLAVLYHRWGHLDLAKKHYEISLQLDPTA). The N-linked (GlcNAc...) asparagine glycan is linked to N497. The N-linked (GlcNAc...) asparagine glycan is linked to N609.

Belongs to the TMTC family.

The protein resides in the membrane. The protein localises to the endoplasmic reticulum. The enzyme catalyses a di-trans,poly-cis-dolichyl beta-D-mannosyl phosphate + L-seryl-[protein] = 3-O-(alpha-D-mannosyl)-L-seryl-[protein] + a di-trans,poly-cis-dolichyl phosphate + H(+). The catalysed reaction is a di-trans,poly-cis-dolichyl beta-D-mannosyl phosphate + L-threonyl-[protein] = 3-O-(alpha-D-mannosyl)-L-threonyl-[protein] + a di-trans,poly-cis-dolichyl phosphate + H(+). It participates in protein modification; protein glycosylation. Its function is as follows. Transfers mannosyl residues to the hydroxyl group of serine or threonine residues. The 4 members of the TMTC family are O-mannosyl-transferases dedicated primarily to the cadherin superfamily, each member seems to have a distinct role in decorating the cadherin domains with O-linked mannose glycans at specific regions. Also acts as O-mannosyl-transferase on other proteins such as PDIA3. The polypeptide is Protein O-mannosyl-transferase TMTC4 (Homo sapiens (Human)).